The chain runs to 1342 residues: MVYSYTEKKRIRKDFGKRPQVLDVPYLLSIQLDSFQKFIEQDPEGQYGLEAAFRSVFPIQSYSGNSELQYVSYRLGEPVFDVQECQIRGVTYSAPLRVKLRLVIYEREAPEGTVKDIKEQEVYMGEIPLMTDNGTFVINGTERVIVSQLHRSPGVFFDSDKGKTHSSGKVLYNARIIPYRGSWLDFEFDPKDNLFVRIDRRRKLPATIILRALNYTTEQILDLFFEKVIFEIRDNKLQMELVPERLRGETASFDIEANGKVYVEKGRRITARHIRQLEKDDVKLIEVSVEYIAGKVVAKDYIDESTGELICAANMELSLDLLAKLSQSGHKRIETLFTNDLDHGPYISETLRVDPTNDRLSALVEIYRMMRPGEPPTREAAESLFENLFFSEDRYDLSAVGRMKFNRSLLREEIEGSGILSKDDIIDVMKKLIDIRNGKGEVDDIDHLGNRRIRSVGEMAENQFRVGLVRVERAVKERLSLGDLDTLMPQDMINAKPISAAVKEFFGSSQLSQFMDQNNPLSEITHKRRISALGPGGLTRERAGFEVRDVHPTHYGRVCPIETPEGPNIGLINSLSVYAQTNEYGFLETPYRKVTDGVVTDEIHYLSAIEEGNYVIAQANSNLDEEGHFVEDLVTCRSKGESSLFSRDQVDYMDVSTQQVVSVGASLIPFLEHDDANRALMGANMQRQAVPTLRADKPLVGTGMERAVAVDSGVTAVAKRGGVVQYVDASRIVIKVNEDEMYPGEAGIDIYNLTKYTRSNQNTCINQMPCVSLGEPVERGDVLADGPSTDLGELALGQNMRVAFMPWNGYNFEDSILVSERVVQEDRFTTIHIQELACVSRDTKLGPEEITADIPNVGEAALSKLDESGIVYIGAEVTGGDILVGKVTPKGETQLTPEEKLLRAIFGEKASDVKDSSLRVPNGVSGTVIDVQVFTRDGVEKDKRALEIEEMQLKQAKKDLSEELQILEAGLFSRIRAVLVAGGVEAEKLDKLPRDRWLELGLTDEEKQNQLEQLAEQYDELKHEFEKKLEAKRRKITQGDDLAPGVLKIVKVYLAVKRRIQPGDKMAGRHGNKGVISKINPIEDMPYDENGTPVDIVLNPLGVPSRMNIGQILETHLGMAAKGIGDKINAMLKQQQEVAKLREFIQRAYDLGADVRQKVDLSTFSDEEVMRLAENLRKGMPIATPVFDGAKEAEIKELLKLGDLPTSGQIRLYDGRTGEQFERPVTVGYMYMLKLNHLVDDKMHARSTGSYSLVTQQPLGGKAQFGGQRFGEMEVWALEAYGAAYTLQEMLTVKSDDVNGRTKMYKNIVDGNHQMEPGMPESFNVLLKEIRSLGINIELEDE.

An N6-acetyllysine mark is found at Lys-1022 and Lys-1200.

It belongs to the RNA polymerase beta chain family. The RNAP catalytic core consists of 2 alpha, 1 beta, 1 beta' and 1 omega subunit. When a sigma factor is associated with the core the holoenzyme is formed, which can initiate transcription.

The catalysed reaction is RNA(n) + a ribonucleoside 5'-triphosphate = RNA(n+1) + diphosphate. Functionally, DNA-dependent RNA polymerase catalyzes the transcription of DNA into RNA using the four ribonucleoside triphosphates as substrates. This Escherichia coli O81 (strain ED1a) protein is DNA-directed RNA polymerase subunit beta.